A 175-amino-acid polypeptide reads, in one-letter code: Gamma-crystallin B (175 aa).

Beta/gamma crystallin 'Greek key' domains are found at residues G2–S40 and G41–P83. Residues P84 to T88 form a connecting peptide region. Beta/gamma crystallin 'Greek key' domains are found at residues Y89 to E129 and G130 to M172.

Belongs to the beta/gamma-crystallin family. Monomer.

In terms of biological role, crystallins are the dominant structural components of the vertebrate eye lens. The polypeptide is Gamma-crystallin B (CRYGB) (Macaca mulatta (Rhesus macaque)).